A 464-amino-acid chain; its full sequence is DNA primase DnaG (464 aa).

Residues 171 to 245 (DTIIIVEGRA…DIDYVARAPK (75 aa)) enclose the Toprim domain. 3 residues coordinate Mg(2+): Glu177, Asp219, and Asp221.

Belongs to the archaeal DnaG primase family. As to quaternary structure, forms a ternary complex with MCM helicase and DNA. The cofactor is Mg(2+).

The enzyme catalyses ssDNA + n NTP = ssDNA/pppN(pN)n-1 hybrid + (n-1) diphosphate.. Its function is as follows. RNA polymerase that catalyzes the synthesis of short RNA molecules used as primers for DNA polymerase during DNA replication. The protein is DNA primase DnaG of Methanococcus aeolicus (strain ATCC BAA-1280 / DSM 17508 / OCM 812 / Nankai-3).